The chain runs to 130 residues: MSKKTDEILDSLKSLSLLEASELVKQIEEAFGVSAAASAGVVMAAPGAATGGGEAAAEEKTEFDVVLESFDASAKIKVLKEVRNATGLGLGDAKAMVEAAPKTIKEGASKEDAEALKKAIEAVGGKVTLK.

Belongs to the bacterial ribosomal protein bL12 family. In terms of assembly, homodimer. Part of the ribosomal stalk of the 50S ribosomal subunit. Forms a multimeric L10(L12)X complex, where L10 forms an elongated spine to which 2 to 4 L12 dimers bind in a sequential fashion. Binds GTP-bound translation factors.

In terms of biological role, forms part of the ribosomal stalk which helps the ribosome interact with GTP-bound translation factors. Is thus essential for accurate translation. In Prochlorococcus marinus (strain SARG / CCMP1375 / SS120), this protein is Large ribosomal subunit protein bL12.